The chain runs to 146 residues: Large ribosomal subunit protein uL11 (146 aa).

Belongs to the universal ribosomal protein uL11 family. Part of the ribosomal stalk of the 50S ribosomal subunit. Interacts with L10 and the large rRNA to form the base of the stalk. L10 forms an elongated spine to which L12 dimers bind in a sequential fashion forming a multimeric L10(L12)X complex. Post-translationally, one or more lysine residues are methylated.

Its function is as follows. Forms part of the ribosomal stalk which helps the ribosome interact with GTP-bound translation factors. The chain is Large ribosomal subunit protein uL11 from Corynebacterium jeikeium (strain K411).